The sequence spans 328 residues: Cytochrome c biogenesis protein CcsA (328 aa).

The next 8 helical transmembrane spans lie at 13–33, 46–66, 73–93, 101–121, 146–166, 234–254, 263–283, and 295–315; these read ISFS…LVNL, GIVI…IYSG, LYES…ISYF, LNAI…SGLL, MILG…LLVI, IISL…VWAN, WDPK…FLHI, and AIVA…VNLL.

The protein belongs to the CcmF/CycK/Ccl1/NrfE/CcsA family. In terms of assembly, may interact with Ccs1.

It localises to the plastid. The protein resides in the chloroplast thylakoid membrane. Required during biogenesis of c-type cytochromes (cytochrome c6 and cytochrome f) at the step of heme attachment. The sequence is that of Cytochrome c biogenesis protein CcsA from Arabis hirsuta (Hairy rock-cress).